We begin with the raw amino-acid sequence, 191 residues long: MANVSIHPAVDGGVVHGSTEGFAGGTLQCLCASDKVTVDVASQSAHNHACGCSKCWKPEGAKFSVVAVAPRDKVTVTAHPEKLKIVDESATIQRHACTGCGVHLYGRIENKDHAFYGLDFIHTELSQQSGWSPPGFAAFVSSIIETGTPPDQMDGVRARLTELGLTPYDCLSPALMDALSTNVARHKGLLH.

Positions 22–169 (FAGGTLQCLC…LTELGLTPYD (148 aa)) constitute a CENP-V/GFA domain. The Zn(2+) site is built by Cys-29, Cys-31, Cys-50, Cys-52, Cys-55, Cys-97, and Cys-100.

Belongs to the Gfa family. It depends on Zn(2+) as a cofactor.

It carries out the reaction S-(hydroxymethyl)glutathione = glutathione + formaldehyde. It functions in the pathway one-carbon metabolism; formaldehyde degradation; formate from formaldehyde (glutathione route): step 1/3. Functionally, catalyzes the condensation of formaldehyde and glutathione to S-hydroxymethylglutathione. In Xanthomonas campestris pv. campestris (strain B100), this protein is Glutathione-dependent formaldehyde-activating enzyme.